We begin with the raw amino-acid sequence, 177 residues long: 3-hydroxydecanoyl-[acyl-carrier-protein] dehydratase (177 aa).

Histidine 76 is a catalytic residue.

The protein belongs to the thioester dehydratase family. FabA subfamily. As to quaternary structure, homodimer.

It is found in the cytoplasm. The enzyme catalyses a (3R)-hydroxyacyl-[ACP] = a (2E)-enoyl-[ACP] + H2O. The catalysed reaction is (3R)-hydroxydecanoyl-[ACP] = (2E)-decenoyl-[ACP] + H2O. It carries out the reaction (2E)-decenoyl-[ACP] = (3Z)-decenoyl-[ACP]. It functions in the pathway lipid metabolism; fatty acid biosynthesis. In terms of biological role, necessary for the introduction of cis unsaturation into fatty acids. Catalyzes the dehydration of (3R)-3-hydroxydecanoyl-ACP to E-(2)-decenoyl-ACP and then its isomerization to Z-(3)-decenoyl-ACP. Can catalyze the dehydratase reaction for beta-hydroxyacyl-ACPs with saturated chain lengths up to 16:0, being most active on intermediate chain length. The polypeptide is 3-hydroxydecanoyl-[acyl-carrier-protein] dehydratase (Haemophilus influenzae (strain PittGG)).